Here is a 538-residue protein sequence, read N- to C-terminus: GSY2-interacting protein PIG2 (538 aa).

Phosphoserine is present on residues S162, S196, S296, and S304. The CBM21 domain occupies 384-508 (LNLSRGRPVF…NNDSANYKID (125 aa)).

Its function is as follows. Interacts with glycogen synthase 2 (GSY2); possibly also interacts with phosphatase 1 (GLC7). This is GSY2-interacting protein PIG2 (PIG2) from Saccharomyces cerevisiae (strain ATCC 204508 / S288c) (Baker's yeast).